A 339-amino-acid polypeptide reads, in one-letter code: Glycerol-3-phosphate dehydrogenase [NAD(P)+] (339 aa).

3 residues coordinate NADPH: Ser13, Trp14, and Lys108. Sn-glycerol 3-phosphate-binding residues include Lys108, Gly139, and Ser141. Ala143 serves as a coordination point for NADPH. Sn-glycerol 3-phosphate is bound by residues Lys194, Asp247, Ser257, Arg258, and Asn259. Lys194 functions as the Proton acceptor in the catalytic mechanism. Arg258 contacts NADPH. Residues Val282 and Glu284 each coordinate NADPH.

It belongs to the NAD-dependent glycerol-3-phosphate dehydrogenase family.

The protein localises to the cytoplasm. It catalyses the reaction sn-glycerol 3-phosphate + NAD(+) = dihydroxyacetone phosphate + NADH + H(+). It carries out the reaction sn-glycerol 3-phosphate + NADP(+) = dihydroxyacetone phosphate + NADPH + H(+). Its pathway is membrane lipid metabolism; glycerophospholipid metabolism. Catalyzes the reduction of the glycolytic intermediate dihydroxyacetone phosphate (DHAP) to sn-glycerol 3-phosphate (G3P), the key precursor for phospholipid synthesis. This Streptococcus mutans serotype c (strain ATCC 700610 / UA159) protein is Glycerol-3-phosphate dehydrogenase [NAD(P)+].